Here is a 475-residue protein sequence, read N- to C-terminus: Protein transport protein Sec61 subunit alpha (475 aa).

At 1 to 32 (MGFRFLDIVKPFTSLVPEVGQPDRKIPFREKV) the chain is on the cytoplasmic side. A helical membrane pass occupies residues 33–53 (LWTAICLFIFLVCSQIPLYGI). The Lumenal segment spans residues 54–75 (RSTDSSDPFYWAKVIMASNRGT). A helical transmembrane segment spans residues 76–96 (LMELGISPIVTSGMVMQLLAG). Over 97–118 (AKLIEIDQSVKADRDLFSAAQK) the chain is Cytoplasmic. The chain crosses the membrane as a helical span at residues 119 to 139 (LFGMLICVGQGVAYIWSGSYG). Over 140–145 (DPAVLG) the chain is Lumenal. Residues 146 to 166 (FGNCFLIVLQLFFAGIIVMLL) form a helical membrane-spanning segment. Residues 167 to 173 (DELLQKG) are Cytoplasmic-facing. The helical transmembrane segment at 174–194 (YGIGSGISLFIATNICETIVW) threads the bilayer. The Lumenal portion of the chain corresponds to 195–241 (KTFSPTTVSVGKGTEFEGAVIALFHLLLTRNDKVRALKEAFYRQNLP). A helical transmembrane segment spans residues 242-262 (NITNLLATVLIFMVVIYFQGF). Over 263 to 289 (RVDLPVKSTRVSGQQGTYPIKLFYTSN) the chain is Cytoplasmic. The helical transmembrane segment at 290–310 (IPIILQSALVSNLYFISQLLY) threads the bilayer. The Lumenal portion of the chain corresponds to 311–353 (RRFPDNILVNLFGAWRTSEYSQQMIPVSGLTYYISSPNNMSAV). The helical transmembrane segment at 354 to 374 (LADPFHALFYITFMLTSCALF) threads the bilayer. The Cytoplasmic portion of the chain corresponds to 375 to 411 (SKVWIEVSGSSARDVAKQLKDQQMTMKGHRDTSVIKE). The chain crosses the membrane as a helical span at residues 412–434 (LNRYIPTAAAFGGLCIGALTVVA). The Lumenal portion of the chain corresponds to 435–440 (DFMGAI). A helical membrane pass occupies residues 441–461 (GSGTGILLAVTIIYQYFETFV). Residues 462–475 (KEQQELSGGIGGLF) lie on the Cytoplasmic side of the membrane.

Belongs to the SecY/SEC61-alpha family. As to quaternary structure, heterotrimeric complex composed of SEC61-alpha, SEC61-beta and SEC61-gamma.

It is found in the endoplasmic reticulum membrane. In terms of biological role, appears to play a crucial role in the insertion of secretory and membrane polypeptides into the ER. It is required for assembly of membrane and secretory proteins. Found to be tightly associated with membrane-bound ribosomes, either directly or through adaptor proteins. The chain is Protein transport protein Sec61 subunit alpha (sec61a) from Dictyostelium discoideum (Social amoeba).